The chain runs to 403 residues: S-adenosylmethionine:tRNA ribosyltransferase-isomerase (403 aa).

Belongs to the QueA family. As to quaternary structure, monomer.

The protein localises to the cytoplasm. It carries out the reaction 7-aminomethyl-7-carbaguanosine(34) in tRNA + S-adenosyl-L-methionine = epoxyqueuosine(34) in tRNA + adenine + L-methionine + 2 H(+). It functions in the pathway tRNA modification; tRNA-queuosine biosynthesis. Its function is as follows. Transfers and isomerizes the ribose moiety from AdoMet to the 7-aminomethyl group of 7-deazaguanine (preQ1-tRNA) to give epoxyqueuosine (oQ-tRNA). This Psychrobacter arcticus (strain DSM 17307 / VKM B-2377 / 273-4) protein is S-adenosylmethionine:tRNA ribosyltransferase-isomerase.